The chain runs to 287 residues: Protoheme IX farnesyltransferase (287 aa).

Helical transmembrane passes span 9-29 (IVTM…SATL), 31-51 (LIDW…AGAA), 94-114 (IILW…TWLI), 132-152 (VGAI…GGTL), 158-178 (WMLF…IAWL), 202-222 (AWQS…LAWF), 228-248 (VASA…WPLL), and 267-287 (LRWS…RASL).

Belongs to the UbiA prenyltransferase family. Protoheme IX farnesyltransferase subfamily.

The protein resides in the cell inner membrane. The enzyme catalyses heme b + (2E,6E)-farnesyl diphosphate + H2O = Fe(II)-heme o + diphosphate. Its pathway is porphyrin-containing compound metabolism; heme O biosynthesis; heme O from protoheme: step 1/1. Converts heme B (protoheme IX) to heme O by substitution of the vinyl group on carbon 2 of heme B porphyrin ring with a hydroxyethyl farnesyl side group. This chain is Protoheme IX farnesyltransferase, found in Rhodopirellula baltica (strain DSM 10527 / NCIMB 13988 / SH1).